The chain runs to 637 residues: MTREQQAYDESQIQVLEGLEAVRKRPGMYIGSTSSRGLHHLVWEIVDNSIDEAMAGFCDEIGVVIEEDNSITVTDNGRGIPVGIHEKMGRPAVEVIMTVLHAGGKFGGGGYKVSGGLHGVGASVVNALSTMLEVEVHREGKVHYQKFHRGVPAADLEVIGTTDRTGTKIHFKPDGDIFTETTVFEYDTLASRLRELAFLNKGLRIKITDMREEEKSDEFHYEGGIASFVEHLNRTRETLHETPIHIEGEKQGVYVEIAVQYNDGFTSNIYSFANNINTHEGGTHESGFKTGLTRVINDYARKHNLFKESDPNLTGEDVREGLTAIISVKIPDPQFEGQTKTKLGNSEARTITDSLFTEHFSRFLIEHPQVARKLVDKGLMASRAREAAKKARELTRRKSALEVSSLPGKLADCSSRDASISEIYIVEGDSAGGSAKQGRDRHFQAILPLRGKILNVEKARLDKILANNEIRAIITALGTGIGDDFDIEKARYHKIIIMTDADVDGAHIRTLILTFFYRYMRPLIEHGYVYIAQPPLYKVQQGKDIQYAYGDAELQEILSQLPDKAKPGIQRYKGLGEMNPSQLWETTMDPGQRTVLQVTLEDAMKADEIFEILMGDRVEPRRDFIQENARYVKNLDI.

In terms of domain architecture, Toprim spans 421–535 (SEIYIVEGDS…HGYVYIAQPP (115 aa)). Glu427, Asp500, and Asp502 together coordinate Mg(2+).

Belongs to the type II topoisomerase GyrB family. As to quaternary structure, heterotetramer, composed of two GyrA and two GyrB chains. In the heterotetramer, GyrA contains the active site tyrosine that forms a transient covalent intermediate with DNA, while GyrB binds cofactors and catalyzes ATP hydrolysis. It depends on Mg(2+) as a cofactor. Mn(2+) is required as a cofactor. Requires Ca(2+) as cofactor.

Its subcellular location is the cytoplasm. It catalyses the reaction ATP-dependent breakage, passage and rejoining of double-stranded DNA.. Its function is as follows. A type II topoisomerase that negatively supercoils closed circular double-stranded (ds) DNA in an ATP-dependent manner to modulate DNA topology and maintain chromosomes in an underwound state. Negative supercoiling favors strand separation, and DNA replication, transcription, recombination and repair, all of which involve strand separation. Also able to catalyze the interconversion of other topological isomers of dsDNA rings, including catenanes and knotted rings. Type II topoisomerases break and join 2 DNA strands simultaneously in an ATP-dependent manner. In Halalkalibacterium halodurans (strain ATCC BAA-125 / DSM 18197 / FERM 7344 / JCM 9153 / C-125) (Bacillus halodurans), this protein is DNA gyrase subunit B.